Here is a 78-residue protein sequence, read N- to C-terminus: Acyl carrier protein (78 aa).

The Carrier domain maps to 2 to 77 (SNIEQQVKKI…LAIDYINAHN (76 aa)). Ser37 is subject to O-(pantetheine 4'-phosphoryl)serine.

The protein belongs to the acyl carrier protein (ACP) family. Post-translationally, 4'-phosphopantetheine is transferred from CoA to a specific serine of apo-ACP by AcpS. This modification is essential for activity because fatty acids are bound in thioester linkage to the sulfhydryl of the prosthetic group.

Its subcellular location is the cytoplasm. It functions in the pathway lipid metabolism; fatty acid biosynthesis. Functionally, carrier of the growing fatty acid chain in fatty acid biosynthesis. The polypeptide is Acyl carrier protein (Neisseria gonorrhoeae (strain ATCC 700825 / FA 1090)).